The chain runs to 251 residues: 2,3-bisphosphoglycerate-dependent phosphoglycerate mutase (251 aa).

Substrate is bound by residues 13–20 (RHGESEWN), 26–27 (TG), Arg65, 92–95 (ERHY), Lys103, 119–120 (RR), and 186–187 (GN). His14 acts as the Tele-phosphohistidine intermediate in catalysis. The active-site Proton donor/acceptor is Glu92.

This sequence belongs to the phosphoglycerate mutase family. BPG-dependent PGAM subfamily.

It carries out the reaction (2R)-2-phosphoglycerate = (2R)-3-phosphoglycerate. It functions in the pathway carbohydrate degradation; glycolysis; pyruvate from D-glyceraldehyde 3-phosphate: step 3/5. Catalyzes the interconversion of 2-phosphoglycerate and 3-phosphoglycerate. The chain is 2,3-bisphosphoglycerate-dependent phosphoglycerate mutase from Rhodococcus jostii (strain RHA1).